The chain runs to 310 residues: Putative methyltransferase mtx subunit H (310 aa).

It belongs to the MtrH family. May be part of a complex composed of 3 subunits; MtxA, MtxH and MtxX.

The chain is Putative methyltransferase mtx subunit H (mtxH) from Methanosarcina acetivorans (strain ATCC 35395 / DSM 2834 / JCM 12185 / C2A).